We begin with the raw amino-acid sequence, 307 residues long: Mitochondrial glycine transporter (307 aa).

Solcar repeat units lie at residues 8–87, 115–199, and 221–305; these read PRNS…MRSS, LTMY…SKQL, and TSTT…LVKR. The next 6 helical transmembrane spans lie at 14–39, 62–88, 121–146, 174–197, 225–251, and 280–298; these read LIGGFFGGLTSAVALQPLDLLKTRIQ, GTLPSALRTSIGSALYLSCLNLMRSSL, LLTGAFARGLVGYITMPITVIKVRYE, GFGATCLRDAPYAGLYVLLYEKSK, VNTTSAVLSASLATTVTAPFDTIKTRM, and GLSMRLARKALSAGIAWGI.

The protein belongs to the mitochondrial carrier (TC 2.A.29) family. SLC25A38 subfamily.

The protein localises to the mitochondrion inner membrane. It catalyses the reaction glycine(in) = glycine(out). Its function is as follows. Mitochondrial glycine transporter that imports glycine into the mitochondrial matrix. Plays an important role in providing glycine for the first enzymatic step in heme biosynthesis, the condensation of glycine with succinyl-CoA to produce 5-aminolevulinate (ALA) in the mitochondrial matrix. In Saccharomyces cerevisiae (strain RM11-1a) (Baker's yeast), this protein is Mitochondrial glycine transporter.